A 459-amino-acid chain; its full sequence is V-type ATP synthase beta chain (459 aa).

It belongs to the ATPase alpha/beta chains family.

Its function is as follows. Produces ATP from ADP in the presence of a proton gradient across the membrane. The V-type beta chain is a regulatory subunit. This chain is V-type ATP synthase beta chain, found in Clostridium botulinum (strain Alaska E43 / Type E3).